A 659-amino-acid polypeptide reads, in one-letter code: MLYPQEFDVIVVGGGHAGTEAALAAARMGCRTLLLSHNIETLGQMSCNPSIGGIGKGHLVKEVDALGGAMALATDIGGIQFRILNSSKGPAVRATRAQADRILYKAAIRDMLENQPNLWLFQQAVDDLMVEGDRVVGAVTQVGVRFRSRTVVLTAGTFLDGKIHVGLNNYAAGRAGDPPAVSLSSRLKELQLPQGRLKTGTPPRLDGRSIDFSQCEEQPGDGMPGGVNEGVLPVFSFIGNAAMHPRQMPCWITHTNERTHDIIRSGFDRSPMFTGKIEGVGPRYCPSVEDKINRFADKESHQIFLEPEGLTTNEFYPNGISTSLPFDIQYELVRSMKGLENAHILRPGYAIEYDYFDPRSLKSSFETRQIQGLFFAGQINGTTGYEEAAAQGLFAGLNAALQCRGQEAWLPRRDEAYLGVLVDDLITKGVTEPYRMFTSRAEFRLQLREDNADMRLTEAGRAMGLVDDARWDAFSRKRDAVSRETERLKSTWVNPRIVTPEESERVLGKSIEREYNLFDLLRRPDVGYGKLMSLNEGRYASADVQPDVLGDLSASVVEQVEIAAKYAGYIDRQKDEVQRAAHFENLRLPAELDYMQVPALSFEVRQSLQKHRPETLGQASRMSGVTPAAISLLMVHLKKGGFRGFAPDVTDAKGEEASA.

G13–G18 contributes to the FAD binding site. NAD(+) is bound at residue G281 to F295.

It belongs to the MnmG family. As to quaternary structure, homodimer. Heterotetramer of two MnmE and two MnmG subunits. The cofactor is FAD.

Its subcellular location is the cytoplasm. Functionally, NAD-binding protein involved in the addition of a carboxymethylaminomethyl (cmnm) group at the wobble position (U34) of certain tRNAs, forming tRNA-cmnm(5)s(2)U34. The chain is tRNA uridine 5-carboxymethylaminomethyl modification enzyme MnmG from Delftia acidovorans (strain DSM 14801 / SPH-1).